Consider the following 30-residue polypeptide: Conotoxin Bt12.1 (30 aa).

Contains 3 disulfide bonds. In terms of tissue distribution, expressed by the venom duct.

It localises to the secreted. In Conus betulinus (Beech cone), this protein is Conotoxin Bt12.1.